The following is a 324-amino-acid chain: Anthranilate phosphoribosyltransferase (324 aa).

Residues glycine 72, 75-76, serine 80, 82-85, 99-107, and serine 111 each bind 5-phospho-alpha-D-ribose 1-diphosphate; these read GD, NVST, and KHGNVSITS. Residue glycine 72 coordinates anthranilate. Residue serine 84 coordinates Mg(2+). Asparagine 102 contacts anthranilate. Anthranilate is bound at residue arginine 157. Residues aspartate 215 and glutamate 216 each contribute to the Mg(2+) site.

The protein belongs to the anthranilate phosphoribosyltransferase family. Homodimer. Mg(2+) serves as cofactor.

The catalysed reaction is N-(5-phospho-beta-D-ribosyl)anthranilate + diphosphate = 5-phospho-alpha-D-ribose 1-diphosphate + anthranilate. It functions in the pathway amino-acid biosynthesis; L-tryptophan biosynthesis; L-tryptophan from chorismate: step 2/5. Functionally, catalyzes the transfer of the phosphoribosyl group of 5-phosphorylribose-1-pyrophosphate (PRPP) to anthranilate to yield N-(5'-phosphoribosyl)-anthranilate (PRA). This is Anthranilate phosphoribosyltransferase from Pyrococcus abyssi (strain GE5 / Orsay).